The sequence spans 92 residues: Costars family protein ST45-2 (92 aa).

At M1 the chain carries N-acetylmethionine.

This sequence belongs to the costars family.

This chain is Costars family protein ST45-2, found in Eutrema halophilum (Salt cress).